Here is an 886-residue protein sequence, read N- to C-terminus: DNA double-strand break repair Rad50 ATPase (886 aa).

ATP-binding positions include 32–38 (NGAGKSS) and Q137. 2 coiled-coil regions span residues 181–240 (IRSL…KEIK) and 320–416 (RKKE…GDLN). One can recognise a Zinc-hook domain in the interval 391–489 (IKDVSDRINQ…EREELEATRN (99 aa)). Positions 437 and 440 each coordinate Zn(2+). Coiled-coil stretches lie at residues 450–657 (AKIR…ISEL) and 682–718 (EADK…EESK).

This sequence belongs to the SMC family. RAD50 subfamily. Homodimer. Forms a heterotetramer composed of two Mre11 subunits and two Rad50 subunits. Interacts with Mre11 and HerA. Zn(2+) is required as a cofactor.

Its function is as follows. Part of the Rad50/Mre11 complex, which is involved in the early steps of DNA double-strand break (DSB) repair. The complex may facilitate opening of the processed DNA ends to aid in the recruitment of HerA and NurA. Rad50 controls the balance between DNA end bridging and DNA resection via ATP-dependent structural rearrangements of the Rad50/Mre11 complex. The polypeptide is DNA double-strand break repair Rad50 ATPase (Sulfolobus acidocaldarius (strain ATCC 33909 / DSM 639 / JCM 8929 / NBRC 15157 / NCIMB 11770)).